The sequence spans 225 residues: Suppressor of cytokine signaling 3 (225 aa).

Residues 22–33 (LKTFSSKSEYQL) are kinase inhibitory region (KIR). The extended SH2 subdomain (ESS) stretch occupies residues 34 to 45 (VVNAVRKLQESG). The SH2 domain maps to 46–142 (FYWSAVTGGE…APSFSLPPTE (97 aa)). Positions 141-160 (TEPSFEVQEQPPAQALPGGT) are disordered. The SOCS box domain maps to 177–224 (VLSRPLSSNVATLQHLCRKTVNGHLDSYEKVTQLPGPIREFLDQYDAP).

Interacts with multiple activated proteins of the tyrosine kinase signaling pathway including IGF1 receptor, insulin receptor and JAK2. Binding to JAK2 is mediated through the KIR and SH2 domains to a phosphorylated tyrosine residue within the JAK2 JH1 domain. Binds specific activated tyrosine residues of the leptin, EPO, IL12, GSCF and gp130 receptors. Interaction with CSNK1E stabilize SOCS3 protein. Component of the probable ECS(SOCS3) E3 ubiquitin-protein ligase complex which contains CUL5, RNF7/RBX2, Elongin BC complex and SOCS3. Interacts with CUL5, RNF7, ELOB and ELOC. Interacts with FGFR3. Interacts with INSR. Interacts with BCL10; this interaction may interfere with BCL10-binding with PELI2. Interacts with NOD2 (via CARD domain); the interaction promotes NOD2 degradation. In terms of processing, phosphorylated on tyrosine residues after stimulation by the cytokines, IL-2, EPO or IGF1.

Its pathway is protein modification; protein ubiquitination. In terms of biological role, SOCS family proteins form part of a classical negative feedback system that regulates cytokine signal transduction. SOCS3 is involved in negative regulation of cytokines that signal through the JAK/STAT pathway. Inhibits cytokine signal transduction by binding to tyrosine kinase receptors including IL6ST/gp130, LIF, erythropoietin, insulin, IL12, GCSF and leptin receptors. Binding to JAK2 inhibits its kinase activity and regulates IL6 signaling. Suppresses fetal liver erythropoiesis. Regulates onset and maintenance of allergic responses mediated by T-helper type 2 cells. Probable substrate recognition component of a SCF-like ECS (Elongin BC-CUL2/5-SOCS-box protein) E3 ubiquitin-protein ligase complex which mediates the ubiquitination and subsequent proteasomal degradation of target proteins. This is Suppressor of cytokine signaling 3 from Rattus norvegicus (Rat).